The following is an 813-amino-acid chain: Cadherin-22 (813 aa).

Positions 1 to 33 (MRPRPAGALRAGAALSPVLLLLLLLQLLGHLWA) are cleaved as a signal peptide. Over 34–621 (ASTPAPSSLS…AFVMAASLSP (588 aa)) the chain is Extracellular. Cadherin domains lie at 61-165 (WVWN…EPRF), 166-274 (LHGP…PPRF), 275-391 (PQKM…PPEF), 392-495 (RPPS…NPPE), and 496-613 (LATP…TTAF). Asn159 carries an N-linked (GlcNAc...) asparagine glycan. Residues Asn463 and Asn609 are each glycosylated (N-linked (GlcNAc...) asparagine). The helical transmembrane segment at 622–642 (GALIALLVCVLILVVLALLIL) threads the bilayer. Residues 643–813 (TLRRHHKSHL…HRGDDEAPAS (171 aa)) are Cytoplasmic-facing. A disordered region spans residues 696 to 726 (GGDPGGGAASPPQAASSSERHSLPRGPSSPE).

Strongly expressed in the pituitary gland and the brain (in the inner granular and glomerular layers of the olfactory bulb, anterior olfactory nucleus, primary olfactory cortex, Purkinje cell layer of cerebellum, and pineal gland). Low expression in lung and heart. No expression in submandibular gland, thymus, liver, spleen, adrenal, and kidney.

The protein localises to the cell membrane. Its function is as follows. Cadherins are calcium-dependent cell adhesion proteins. They preferentially interact with themselves in a homophilic manner in connecting cells; cadherins may thus contribute to the sorting of heterogeneous cell types. PB-cadherins may have a role in the morphological organization of pituitary gland and brain tissues. This chain is Cadherin-22 (Cdh22), found in Rattus norvegicus (Rat).